Reading from the N-terminus, the 444-residue chain is Tubulin beta-8 chain (444 aa).

The MREI motif signature appears at M1–I4. Residues Q11, E69, S138, G142, T143, and G144 each contribute to the GTP site. E69 is a Mg(2+) binding site. A Phosphoserine; by CDK1 modification is found at S172. 2 residues coordinate GTP: N204 and N226. Residues Q423 to A444 form a disordered region. The span at T429–A444 shows a compositional bias: acidic residues. At E436 the chain carries 5-glutamyl polyglutamate.

This sequence belongs to the tubulin family. Dimer of alpha and beta chains. A typical microtubule is a hollow water-filled tube with an outer diameter of 25 nm and an inner diameter of 15 nM. Alpha-beta heterodimers associate head-to-tail to form protofilaments running lengthwise along the microtubule wall with the beta-tubulin subunit facing the microtubule plus end conferring a structural polarity. Microtubules usually have 13 protofilaments but different protofilament numbers can be found in some organisms and specialized cells. The cofactor is Mg(2+). In terms of processing, some glutamate residues at the C-terminus are polyglutamylated, resulting in polyglutamate chains on the gamma-carboxyl group. Polyglutamylation plays a key role in microtubule severing by spastin (SPAST). SPAST preferentially recognizes and acts on microtubules decorated with short polyglutamate tails: severing activity by SPAST increases as the number of glutamates per tubulin rises from one to eight, but decreases beyond this glutamylation threshold. Glutamylation is also involved in cilia motility. Post-translationally, some glutamate residues at the C-terminus are monoglycylated but not polyglycylated due to the absence of functional TTLL10 in human. Monoglycylation is mainly limited to tubulin incorporated into cilia and flagella axonemes, which is required for their stability and maintenance. Flagella glycylation controls sperm motility. Both polyglutamylation and monoglycylation can coexist on the same protein on adjacent residues, and lowering glycylation levels increases polyglutamylation, and reciprocally. Phosphorylated on Ser-172 by CDK1 during the cell cycle, from metaphase to telophase, but not in interphase. This phosphorylation inhibits tubulin incorporation into microtubules. As to expression, expressed at a high level in oocytes, at different stages of development.

The protein resides in the cytoplasm. It localises to the cytoskeleton. The protein localises to the spindle. In terms of biological role, tubulin is the major constituent of microtubules, a cylinder consisting of laterally associated linear protofilaments composed of alpha- and beta-tubulin heterodimers. Microtubules grow by the addition of GTP-tubulin dimers to the microtubule end, where a stabilizing cap forms. Below the cap, tubulin dimers are in GDP-bound state, owing to GTPase activity of alpha-tubulin. TUBB8 has a key role in meiotic spindle assembly and oocyte maturation. The protein is Tubulin beta-8 chain of Homo sapiens (Human).